Consider the following 410-residue polypeptide: Protein king tubby 1 (410 aa).

2 disordered regions span residues 44–109 (QFMM…STRH) and 121–159 (ISPA…EGDV). The segment covering 47 to 72 (MSPNNPDQILTSTGNASVTTTPTSPY) has biased composition (polar residues). A compositionally biased stretch (basic and acidic residues) spans 132–143 (SHHDSSSGKSVE).

The protein belongs to the TUB family.

It localises to the cytoplasm. The protein resides in the nucleus. The polypeptide is Protein king tubby 1 (king-tubby1) (Aedes aegypti (Yellowfever mosquito)).